Reading from the N-terminus, the 484-residue chain is MASPFFFVFLLSALSLENTYASPNYREALSKSLLFFQGQRSGRLPSDQQLSWRSSSGLSDGSSAHVDLTGGYYDAGDNVKFNFPMAFTTTMLSWSSLEYGKKMGPELQNSRVAIRWATDYLLKCARATPGKLYVGVGDPNGDHKCWERPEDMDTPRTVYSVSPSNPGSDVAAETAAALAASSMVFRKVDPKYSRLLLATAKKVMQFAIQYRGAYSNSLSSSVCPFYCSYSGYKDELLWGAAWLHRATNDPYYTNFIKSLGGGDQPDIFSWDNKYAGAYVLLSRRAVLNKDNNFELYKQAAENFMCKILPNSPSSSTKYTKGGLMYKLPQSNLQYVTSITFLLTTYAKYMKSTKQTFNCGNSLIVPNALINLSKRQVDYVLGVNPMKMSYMVGFSSNFPKRIHHRGSSLPSRAVRSNSLGCNGGFQSFRTQNPNPNILTGAIVGGPNQNDEYPDQRDDYTRSEPATYINAAFVGPLAYFAASRSP.

An N-terminal signal peptide occupies residues 1–21; that stretch reads MASPFFFVFLLSALSLENTYA. The active-site Nucleophile is D77. N-linked (GlcNAc...) asparagine glycosylation occurs at N370. Residues H402, D453, and E462 contribute to the active site.

This sequence belongs to the glycosyl hydrolase 9 (cellulase E) family. In terms of tissue distribution, specifically expressed in root cap cells.

It is found in the secreted. It carries out the reaction Endohydrolysis of (1-&gt;4)-beta-D-glucosidic linkages in cellulose, lichenin and cereal beta-D-glucans.. May be involved in the sloughing (cell-cell separation) of the root cap cells from root tip. This chain is Endoglucanase 3 (CEL5), found in Arabidopsis thaliana (Mouse-ear cress).